We begin with the raw amino-acid sequence, 191 residues long: Protein GrpE (191 aa).

The segment at 1-49 is disordered; that stretch reads MSEEKQTAEQVEAAEQEEVTEQAEQAASQEQHEETAGQEEALQHQIDEL. A compositionally biased stretch (acidic residues) spans 12–21; that stretch reads EAAEQEEVTE. Positions 30 to 49 are enriched in basic and acidic residues; it reads EQHEETAGQEEALQHQIDEL.

It belongs to the GrpE family. As to quaternary structure, homodimer.

Its subcellular location is the cytoplasm. In terms of biological role, participates actively in the response to hyperosmotic and heat shock by preventing the aggregation of stress-denatured proteins, in association with DnaK and GrpE. It is the nucleotide exchange factor for DnaK and may function as a thermosensor. Unfolded proteins bind initially to DnaJ; upon interaction with the DnaJ-bound protein, DnaK hydrolyzes its bound ATP, resulting in the formation of a stable complex. GrpE releases ADP from DnaK; ATP binding to DnaK triggers the release of the substrate protein, thus completing the reaction cycle. Several rounds of ATP-dependent interactions between DnaJ, DnaK and GrpE are required for fully efficient folding. This chain is Protein GrpE, found in Bacillus velezensis (strain DSM 23117 / BGSC 10A6 / LMG 26770 / FZB42) (Bacillus amyloliquefaciens subsp. plantarum).